The following is a 60-amino-acid chain: Large ribosomal subunit protein uL30 (60 aa).

The protein belongs to the universal ribosomal protein uL30 family. In terms of assembly, part of the 50S ribosomal subunit.

The protein is Large ribosomal subunit protein uL30 of Polaromonas naphthalenivorans (strain CJ2).